The chain runs to 328 residues: DNA-directed RNA polymerase subunit alpha (328 aa).

Residues 1 to 231 are alpha N-terminal domain (alpha-NTD); sequence MIYQMQMPAK…EHVAFFADFS (231 aa). Residues 252–328 are alpha C-terminal domain (alpha-CTD); sequence MRKLLNTKIE…MDITKYQMKG (77 aa).

The protein belongs to the RNA polymerase alpha chain family. As to quaternary structure, homodimer. The RNAP catalytic core consists of 2 alpha, 1 beta, 1 beta' and 1 omega subunit. When a sigma factor is associated with the core the holoenzyme is formed, which can initiate transcription.

It carries out the reaction RNA(n) + a ribonucleoside 5'-triphosphate = RNA(n+1) + diphosphate. Functionally, DNA-dependent RNA polymerase catalyzes the transcription of DNA into RNA using the four ribonucleoside triphosphates as substrates. In Chlorobium phaeovibrioides (strain DSM 265 / 1930) (Prosthecochloris vibrioformis (strain DSM 265)), this protein is DNA-directed RNA polymerase subunit alpha.